The primary structure comprises 441 residues: Homogentisate 1,2-dioxygenase (441 aa).

Catalysis depends on His-287, which acts as the Proton acceptor. Positions 330 and 336 each coordinate Fe cation. Homogentisate contacts are provided by Tyr-345 and His-366. His-366 is a Fe cation binding site.

The protein belongs to the homogentisate dioxygenase family. As to quaternary structure, hexamer; dimer of trimers. Requires Fe cation as cofactor.

The catalysed reaction is homogentisate + O2 = 4-maleylacetoacetate + H(+). It participates in amino-acid degradation; L-phenylalanine degradation; acetoacetate and fumarate from L-phenylalanine: step 4/6. Functionally, involved in the catabolism of homogentisate (2,5-dihydroxyphenylacetate or 2,5-OH-PhAc), a central intermediate in the degradation of phenylalanine and tyrosine. Catalyzes the oxidative ring cleavage of the aromatic ring of homogentisate to yield maleylacetoacetate. The protein is Homogentisate 1,2-dioxygenase of Xanthomonas oryzae pv. oryzae (strain MAFF 311018).